A 497-amino-acid chain; its full sequence is Casein kinase I isoform delta (497 aa).

2 disordered regions span residues 1–58 (MATM…EEMN) and 86–109 (PIQQHQQPPLLQQAQPSQIPHPTQ). Positions 14 to 34 (WHNNTSTPMDTTEPATNSHNP) are enriched in polar residues. Low complexity predominate over residues 88–105 (QQHQQPPLLQQAQPSQIP). Positions 191 to 458 (FRLGRKIGSG…YLRNLFRTLF (268 aa)) constitute a Protein kinase domain. Residues 197–205 (IGSGSFGDI) and lysine 220 each bind ATP. Aspartate 310 functions as the Proton acceptor in the catalytic mechanism.

The protein belongs to the protein kinase superfamily. CK1 Ser/Thr protein kinase family. Casein kinase I subfamily. In terms of assembly, monomer. As to expression, expressed throughout larval development and into the adult stage in both hypodermal seam cells and the hermaphrodite specific neuron.

Its subcellular location is the cytoplasm. The protein resides in the nucleus. The protein localises to the chromosome. It is found in the centromere. It localises to the cell junction. Its subcellular location is the adherens junction. It carries out the reaction L-seryl-[protein] + ATP = O-phospho-L-seryl-[protein] + ADP + H(+). It catalyses the reaction L-threonyl-[protein] + ATP = O-phospho-L-threonyl-[protein] + ADP + H(+). With respect to regulation, exhibits substrate-dependent heparin activation. In terms of biological role, essential serine/threonine-protein kinase that regulates diverse cellular growth and survival processes including Wnt signaling, DNA repair and circadian rhythms. Casein kinases are operationally defined by their preferential utilization of acidic proteins. Positively regulates the expression of components of the heterochronic pathway, which regulate developmental timing, such as the transcriptional repressor lin-42 and microRNAs such as let-7. Negatively regulates cell cycle exit and cell fusion to prevent the premature differentiation of hypodermal seam cells into adult cells. Plays a role in regulating axon branching and subsequently, the maturation of the nervous system, most likely by preventing the premature termination of transcripts for proteins such as Ankyrin/unc-44, which are required for maintaining the nervous system. May phosphorylate ssup-72 to promote nervous system maturation. The polypeptide is Casein kinase I isoform delta (Caenorhabditis elegans).